We begin with the raw amino-acid sequence, 257 residues long: Global transcriptional regulator CodY (257 aa).

The interval 1–155 (MSLLSKTREL…AATVIGMEIL (155 aa)) is GAF domain. The segment at residues 203–222 (ASKVADGVGITRSVIVNALR) is a DNA-binding region (H-T-H motif).

It belongs to the CodY family.

It is found in the cytoplasm. In terms of biological role, DNA-binding global transcriptional regulator which is involved in the adaptive response to starvation and acts by directly or indirectly controlling the expression of numerous genes in response to nutrient availability. During rapid exponential growth, CodY is highly active and represses genes whose products allow adaptation to nutrient depletion. In Staphylococcus aureus (strain bovine RF122 / ET3-1), this protein is Global transcriptional regulator CodY.